A 423-amino-acid polypeptide reads, in one-letter code: Gamma-glutamyl phosphate reductase (423 aa).

Belongs to the gamma-glutamyl phosphate reductase family.

Its subcellular location is the cytoplasm. The enzyme catalyses L-glutamate 5-semialdehyde + phosphate + NADP(+) = L-glutamyl 5-phosphate + NADPH + H(+). Its pathway is amino-acid biosynthesis; L-proline biosynthesis; L-glutamate 5-semialdehyde from L-glutamate: step 2/2. In terms of biological role, catalyzes the NADPH-dependent reduction of L-glutamate 5-phosphate into L-glutamate 5-semialdehyde and phosphate. The product spontaneously undergoes cyclization to form 1-pyrroline-5-carboxylate. This chain is Gamma-glutamyl phosphate reductase, found in Paraburkholderia phytofirmans (strain DSM 17436 / LMG 22146 / PsJN) (Burkholderia phytofirmans).